The primary structure comprises 583 residues: Complement factor I (583 aa).

The N-terminal stretch at 1-18 (MKLLHVFLLFLCFHLSFC) is a signal peptide. 16 disulfides stabilise this stretch: C33/C255, C43/C54, C48/C59, C61/C93, C67/C86, C75/C106, C141/C181, C154/C214, C186/C196, C229/C247, C259/C271, C266/C284, C278/C293, C327/C453, C365/C381, and C373/C444. A Kazal-like domain is found at 55-108 (IEGTCICKLPYQCPKNGTTVCATNGRSFPTYCQQKSLECLRPGTKFLNNGTCTA). N-linked (GlcNAc...) asparagine glycosylation is found at N70, N103, N173, and N177. The SRCR domain maps to 114 to 212 (VSLKHGNTDS…TMGYQDLADV (99 aa)). 2 LDL-receptor class A domains span residues 213-257 (VCYT…LCCK) and 258-294 (ACQG…VGCE). The Ca(2+) site is built by K239, D242, I244, D246, D252, and E253. Ca(2+)-binding residues include Y276, N279, E281, D283, D289, and E290. The 235-residue stretch at 340–574 (IVGGKRAQLG…YFDWISYHVG (235 aa)) folds into the Peptidase S1 domain. Catalysis depends on charge relay system residues H380 and D429. N-linked (GlcNAc...) asparagine glycosylation is found at N464 and N494. 3 disulfide bridges follow: C467-C531, C495-C510, and C521-C550. Residue S525 is the Charge relay system of the active site. A glycan (N-linked (GlcNAc...) asparagine) is linked at N536.

Belongs to the peptidase S1 family. In terms of assembly, heterodimer of a light and heavy chains; disulfide-linked. The fully processed and mature protein circulates as a zymogen, and is allosterically activated by substrate-induced remodeling of the active site. As to expression, plasma.

It is found in the secreted. It localises to the extracellular space. The enzyme catalyses Inactivates complement subcomponents C3b, iC3b and C4b by proteolytic cleavage.. Its function is as follows. Responsible for cleaving the alpha-chains of C4b and C3b in the presence of the cofactors C4-binding protein and factor H respectively. This chain is Complement factor I (CFI), found in Pongo abelii (Sumatran orangutan).